The primary structure comprises 531 residues: 2-isopropylmalate synthase (531 aa).

The Pyruvate carboxyltransferase domain maps to 8–284 (IIIFDTTLRD…LTNIDTKQIY (277 aa)). Mn(2+)-binding residues include Asp17, His208, His210, and Asn244. Residues 408 to 531 (RVELVQVSCG…TQDKQTEVTA (124 aa)) form a regulatory domain region.

It belongs to the alpha-IPM synthase/homocitrate synthase family. LeuA type 1 subfamily. In terms of assembly, homodimer. The cofactor is Mn(2+).

Its subcellular location is the cytoplasm. The catalysed reaction is 3-methyl-2-oxobutanoate + acetyl-CoA + H2O = (2S)-2-isopropylmalate + CoA + H(+). It functions in the pathway amino-acid biosynthesis; L-leucine biosynthesis; L-leucine from 3-methyl-2-oxobutanoate: step 1/4. Its function is as follows. Catalyzes the condensation of the acetyl group of acetyl-CoA with 3-methyl-2-oxobutanoate (2-ketoisovalerate) to form 3-carboxy-3-hydroxy-4-methylpentanoate (2-isopropylmalate). The polypeptide is 2-isopropylmalate synthase (Trichormus variabilis (strain ATCC 29413 / PCC 7937) (Anabaena variabilis)).